The primary structure comprises 369 residues: tRNA 2-selenouridine synthase (369 aa).

In terms of domain architecture, Rhodanese spans 12–136; that stretch reads FLDDIPLMDV…LRNFLFETTR (125 aa). The active-site S-selanylcysteine intermediate is the Cys95.

It belongs to the SelU family. Monomer.

The catalysed reaction is 5-methylaminomethyl-2-thiouridine(34) in tRNA + selenophosphate + (2E)-geranyl diphosphate + H2O + H(+) = 5-methylaminomethyl-2-selenouridine(34) in tRNA + (2E)-thiogeraniol + phosphate + diphosphate. It catalyses the reaction 5-methylaminomethyl-2-thiouridine(34) in tRNA + (2E)-geranyl diphosphate = 5-methylaminomethyl-S-(2E)-geranyl-thiouridine(34) in tRNA + diphosphate. It carries out the reaction 5-methylaminomethyl-S-(2E)-geranyl-thiouridine(34) in tRNA + selenophosphate + H(+) = 5-methylaminomethyl-2-(Se-phospho)selenouridine(34) in tRNA + (2E)-thiogeraniol. The enzyme catalyses 5-methylaminomethyl-2-(Se-phospho)selenouridine(34) in tRNA + H2O = 5-methylaminomethyl-2-selenouridine(34) in tRNA + phosphate. Involved in the post-transcriptional modification of the uridine at the wobble position (U34) of tRNA(Lys), tRNA(Glu) and tRNA(Gln). Catalyzes the conversion of 2-thiouridine (S2U-RNA) to 2-selenouridine (Se2U-RNA). Acts in a two-step process involving geranylation of 2-thiouridine (S2U) to S-geranyl-2-thiouridine (geS2U) and subsequent selenation of the latter derivative to 2-selenouridine (Se2U) in the tRNA chain. The sequence is that of tRNA 2-selenouridine synthase from Pseudomonas aeruginosa (strain ATCC 15692 / DSM 22644 / CIP 104116 / JCM 14847 / LMG 12228 / 1C / PRS 101 / PAO1).